A 419-amino-acid polypeptide reads, in one-letter code: Capsule polysaccharide modification protein LipB (419 aa).

It localises to the cell inner membrane. In terms of biological role, involved in the phospholipid modification of the capsular polysaccharide, a strong requirement for its translocation to the cell surface. The chain is Capsule polysaccharide modification protein LipB (lipB) from Neisseria meningitidis serogroup B (strain ATCC BAA-335 / MC58).